We begin with the raw amino-acid sequence, 392 residues long: Cytochrome b (392 aa).

4 consecutive transmembrane segments (helical) span residues 38-58 (FGSL…FLAM), 82-104 (WLLR…LHIF), 119-139 (VRCL…TGYV), and 185-205 (FFSL…LHLA). His88 and His102 together coordinate heme b. His189 and His203 together coordinate heme b. A ubiquinone is bound at residue His208. The next 4 membrane-spanning stretches (helical) occupy residues 231-251 (FYVK…IWIF), 295-315 (SGGV…PFFK), 327-347 (IHQG…WIGC), and 354-373 (FVTI…AITP).

Belongs to the cytochrome b family. In terms of assembly, the main subunits of complex b-c1 are: cytochrome b, cytochrome c1 and the Rieske protein. Heme b is required as a cofactor.

The protein resides in the mitochondrion inner membrane. Its function is as follows. Component of the ubiquinol-cytochrome c reductase complex (complex III or cytochrome b-c1 complex) that is part of the mitochondrial respiratory chain. The b-c1 complex mediates electron transfer from ubiquinol to cytochrome c. Contributes to the generation of a proton gradient across the mitochondrial membrane that is then used for ATP synthesis. The sequence is that of Cytochrome b (MT-CYB) from Vicia faba (Broad bean).